The sequence spans 154 residues: Myoglobin (154 aa).

One can recognise a Globin domain in the interval 2–148 (GLSDQEWQQV…FRNDMASKYK (147 aa)). His-65 lines the nitrite pocket. Residue His-65 coordinates O2. Position 94 (His-94) interacts with heme b.

The protein belongs to the globin family. In terms of assembly, monomeric.

The protein localises to the cytoplasm. Its subcellular location is the sarcoplasm. It carries out the reaction Fe(III)-heme b-[protein] + nitric oxide + H2O = Fe(II)-heme b-[protein] + nitrite + 2 H(+). It catalyses the reaction H2O2 + AH2 = A + 2 H2O. Functionally, monomeric heme protein which primary function is to store oxygen and facilitate its diffusion within muscle tissues. Reversibly binds oxygen through a pentacoordinated heme iron and enables its timely and efficient release as needed during periods of heightened demand. Depending on the oxidative conditions of tissues and cells, and in addition to its ability to bind oxygen, it also has a nitrite reductase activity whereby it regulates the production of bioactive nitric oxide. Under stress conditions, like hypoxia and anoxia, it also protects cells against reactive oxygen species thanks to its pseudoperoxidase activity. This Anas poecilorhyncha (Indian spot-billed duck) protein is Myoglobin (MB).